Reading from the N-terminus, the 134-residue chain is Cytochrome b (134 aa).

Helical transmembrane passes span 33–53, 77–98, and 113–133; these read FGSL…FLAM, WLLR…YLHV, and WNIG…GYVL. Residues His83 and His97 each contribute to the heme b site.

The protein belongs to the cytochrome b family. The cytochrome bc1 complex contains 11 subunits: 3 respiratory subunits (MT-CYB, CYC1 and UQCRFS1), 2 core proteins (UQCRC1 and UQCRC2) and 6 low-molecular weight proteins (UQCRH/QCR6, UQCRB/QCR7, UQCRQ/QCR8, UQCR10/QCR9, UQCR11/QCR10 and a cleavage product of UQCRFS1). This cytochrome bc1 complex then forms a dimer. Heme b is required as a cofactor.

Its subcellular location is the mitochondrion inner membrane. Its function is as follows. Component of the ubiquinol-cytochrome c reductase complex (complex III or cytochrome b-c1 complex) that is part of the mitochondrial respiratory chain. The b-c1 complex mediates electron transfer from ubiquinol to cytochrome c. Contributes to the generation of a proton gradient across the mitochondrial membrane that is then used for ATP synthesis. The sequence is that of Cytochrome b (MT-CYB) from Sturnira tildae (Tilda's yellow-shouldered bat).